A 2079-amino-acid chain; its full sequence is Protein xmas (2079 aa).

Residues K12–N83 enclose the RRM domain. The disordered stretch occupies residues N112–R152. One can recognise a PCI domain in the interval D342 to Y525. Residues P835–A1359 are sufficient for Orc3 binding. Disordered stretches follow at residues R1335 to M1360, A1755 to A1778, K1930 to A1963, and S2032 to L2079. Residues H1764 to K1776 are compositionally biased toward basic residues. Positions P2048–V2059 are enriched in low complexity. The segment covering G2070 to L2079 has biased composition (polar residues).

It belongs to the SAC3 family. Component of the nuclear pore complex (NPC)-associated TREX-2/AMEX complex (anchoring and mRNA export complex), composed of e(y)2, xmas and PCID2. Within the TREX-2/ AMEX complex, interactions with e(y)2 is required for localization of e(y)2 to the nuclear periphery. Interaction between the TREX-2/AMEX complex and the ORC complex is required for ORC localization to mRNPs, and consequently mRNA export. Within the TREX-2/AMEX-ORC complex, interacts with Orc6, (via C-terminus) with Orc3, and weakly interacts with Orc4. However, another report found that the interaction with Orc3 is not direct, instead it is mediated via e(y)2. Interacts with piwi. As to expression, expressed in ovaries (at protein level). Detected in the testes and ovaries, with expression levels higher in oocytes than in testicular cells (at protein level). In terms of tissue distribution, detected in the testes and ovaries (at protein level). As to expression, detected in the testes.

It localises to the nucleus. The protein localises to the nucleoplasm. Its subcellular location is the nucleus membrane. It is found in the cytoplasm. Its function is as follows. Involved in mRNA export and mRNA coupled transcription activation. Component of the nuclear pore complex (NPC)-associated TREX-2/AMEX complex (anchoring and mRNA export complex) which functions in docking export-competent ribonucleoprotein particles (mRNPs) to the nuclear entrance of the nuclear pore complex (nuclear basket), thereby enabling the export of mRNAs to the cytoplasm through the nuclear pores. The TREX-2/AMEX complex also functions with the transcriptional coactivator SAGA/TFTC complex, to anchor a subset of transcription sites to the nuclear pore complex basket in order to achieve efficient transcription and export of their resulting mRNAs. Within the complex, required for localization of e(y)2 to the nuclear periphery. The chain is Protein xmas from Drosophila melanogaster (Fruit fly).